The following is a 902-amino-acid chain: Proline-rich transmembrane protein 4 (902 aa).

A signal peptide spans 1 to 18; sequence MAGRSCLELGLFCWVLLA. 3 disordered regions span residues 72–92, 121–149, and 281–333; these read TETH…EEGD, TPWA…SQPR, and SPSS…LLDD. 2 stretches are compositionally biased toward polar residues: residues 122-136 and 281-302; these read PWAS…SRLS and SPSS…STSG. 5 helical membrane passes run 371–391, 393–413, 432–452, 468–488, and 501–521; these read AGAL…LLPW, CPPG…AGTT, LVWL…LGLA, LAAL…GSAV, and GLHA…SCWG. Ser-642 carries the post-translational modification Phosphoserine. 3 disordered regions span residues 701 to 723, 774 to 811, and 839 to 872; these read AGAN…DFRP, AGPS…SLCG, and PPRP…ASEL. Polar residues predominate over residues 704–717; that stretch reads NPTQSTASSPSSDC. The segment covering 786–798 has biased composition (pro residues); sequence SPAPPELPSPGAW. 2 stretches are compositionally biased toward low complexity: residues 799–811 and 843–854; these read PPGS…SLCG and SESSPSLPASGS.

The protein resides in the membrane. The chain is Proline-rich transmembrane protein 4 (Prrt4) from Mus musculus (Mouse).